We begin with the raw amino-acid sequence, 129 residues long: MKKAGILNRHLAGALAELGHGHGVLVCDAGMPIPVGPRVVDLAFRAGVPSFAEVLDGLLDELVVEGATAAREVREANPGATALLQTRFPALELVPHEELKSLSANARLIVRTGEARPYANVLLRCGVFF.

His-20 functions as the Proton donor in the catalytic mechanism. Residues Asp-28, His-96, and 118 to 120 (YAN) contribute to the substrate site.

Belongs to the RbsD / FucU family. RbsD subfamily. In terms of assembly, homodecamer.

It localises to the cytoplasm. The catalysed reaction is beta-D-ribopyranose = beta-D-ribofuranose. The protein operates within carbohydrate metabolism; D-ribose degradation; D-ribose 5-phosphate from beta-D-ribopyranose: step 1/2. Functionally, catalyzes the interconversion of beta-pyran and beta-furan forms of D-ribose. This Streptomyces avermitilis (strain ATCC 31267 / DSM 46492 / JCM 5070 / NBRC 14893 / NCIMB 12804 / NRRL 8165 / MA-4680) protein is D-ribose pyranase.